Reading from the N-terminus, the 293-residue chain is tRNA(His) guanylyltransferase (293 aa).

Mg(2+) is bound by residues Asp-29, Gly-30, and Asp-76. Residues 29–34 (DGRGFT) and 75–76 (SD) each bind GTP. A disordered region spans residues 226–252 (KKVSEEEAEEMSSSAVPEVKSKSQVEK).

Belongs to the tRNA(His) guanylyltransferase family. The cofactor is Mg(2+).

It catalyses the reaction a 5'-end ribonucleotide-tRNA(His) + GTP + ATP + H2O = a 5'-end phospho-guanosine-ribonucleotide-tRNA(His) + AMP + 2 diphosphate + H(+). Adds a GMP to the 5'-end of tRNA(His) after transcription and RNase P cleavage. This Neurospora crassa (strain ATCC 24698 / 74-OR23-1A / CBS 708.71 / DSM 1257 / FGSC 987) protein is tRNA(His) guanylyltransferase (rgt-1).